A 180-amino-acid polypeptide reads, in one-letter code: Adenine phosphoribosyltransferase (180 aa).

This sequence belongs to the purine/pyrimidine phosphoribosyltransferase family. As to quaternary structure, homodimer.

It localises to the cytoplasm. The enzyme catalyses AMP + diphosphate = 5-phospho-alpha-D-ribose 1-diphosphate + adenine. The protein operates within purine metabolism; AMP biosynthesis via salvage pathway; AMP from adenine: step 1/1. Its function is as follows. Catalyzes a salvage reaction resulting in the formation of AMP, that is energically less costly than de novo synthesis. The polypeptide is Adenine phosphoribosyltransferase (Rhizobium johnstonii (strain DSM 114642 / LMG 32736 / 3841) (Rhizobium leguminosarum bv. viciae)).